The primary structure comprises 431 residues: MNVVRRLTSIASGRNFVSSDNVGETETPRSKPNQNREETESTETTSYEKDSVSSSENSDHLPKEIREDMDCGIIKGNGTESGRIITTKKKGLNDQKDKTISYRAEHVIGTGSFGVVFQAKCLETEEKVAIKKVLQDKRYKNRELQIMRMLDHPNVVELKHSFFSTTEKDELYLNLVLEYVPETIYRASRSYTKMNQHMPLIYIQLYTYQICRAMNYLHQVVGVCHRDIKPQNLLVNNVTHEVKICDFGSAKMLIPGEPNISYICSRYYRAPELIFGATEYTSAIDMWSVGCVMAELFLGHPLFPGETSVDQLVEIIKILGTPAREEIKNMNPRYNDFKFPQIKAQPWHKIFRRQVSPEAMDLASRLLQYSPNLRCTALEACAHPFFDDLRDPRASLPNGRALPPLFDFTAQELAGASVELRHRLIPEHARK.

The span at 12-24 shows a compositional bias: polar residues; the sequence is SGRNFVSSDNVGE. The segment at 12-65 is disordered; sequence SGRNFVSSDNVGETETPRSKPNQNREETESTETTSYEKDSVSSSENSDHLPKEI. Basic and acidic residues-rich tracts occupy residues 26–39 and 46–65; these read ETPRSKPNQNREET and SYEKDSVSSSENSDHLPKEI. The Protein kinase domain occupies 102 to 386; the sequence is YRAEHVIGTG…ALEACAHPFF (285 aa). Residues 108–116 and K131 each bind ATP; that span reads IGTGSFGVV. Catalysis depends on D227, which acts as the Proton acceptor. At Y262 the chain carries Phosphotyrosine.

This sequence belongs to the protein kinase superfamily. CMGC Ser/Thr protein kinase family. GSK-3 subfamily. In terms of processing, autophosphorylated mainly on threonine and serine residues.

The catalysed reaction is L-seryl-[protein] + ATP = O-phospho-L-seryl-[protein] + ADP + H(+). The enzyme catalyses L-threonyl-[protein] + ATP = O-phospho-L-threonyl-[protein] + ADP + H(+). May mediate extracellular signals to regulate transcription in differentiating cells. In Arabidopsis thaliana (Mouse-ear cress), this protein is Shaggy-related protein kinase beta.